The chain runs to 1563 residues: Pentafunctional AROM polypeptide (1563 aa).

Residues 1–382 form a 3-dehydroquinate synthase region; sequence MAESSSNPTR…YEPKASVVED (382 aa). NAD(+)-binding positions include 48-50, 82-85, 113-115, and Asp-118; these read DTN, EYSK, and GGV. Arg-129 provides a ligand contact to 7-phospho-2-dehydro-3-deoxy-D-arabino-heptonate. An NAD(+)-binding site is contributed by 138-139; it reads TT. 7-phospho-2-dehydro-3-deoxy-D-arabino-heptonate-binding residues include Asp-145 and Lys-151. Lys-160 contributes to the NAD(+) binding site. Asn-161 lines the 7-phospho-2-dehydro-3-deoxy-D-arabino-heptonate pocket. NAD(+) contacts are provided by residues 178 to 181 and Asn-189; that span reads FLNT. Residue Glu-193 participates in Zn(2+) binding. 7-phospho-2-dehydro-3-deoxy-D-arabino-heptonate-binding positions include 193–196 and Lys-248; that span reads EVIK. The active-site Proton acceptor; for 3-dehydroquinate synthase activity is Glu-258. 7-phospho-2-dehydro-3-deoxy-D-arabino-heptonate contacts are provided by residues 262-266 and His-269; that span reads RNLLN. Position 269 (His-269) interacts with Zn(2+). The active-site Proton acceptor; for 3-dehydroquinate synthase activity is the His-273. Residues His-285 and Lys-354 each contribute to the 7-phospho-2-dehydro-3-deoxy-D-arabino-heptonate site. Residue His-285 participates in Zn(2+) binding. The EPSP synthase stretch occupies residues 395–834; that stretch reads VHAGVPKDLK…WDTMSNYFKS (440 aa). Catalysis depends on Cys-816, which acts as the For EPSP synthase activity. Basic and acidic residues predominate over residues 836–850; that stretch reads LEGEEEPHSSHVSHE. The segment at 836 to 857 is disordered; it reads LEGEEEPHSSHVSHEKPRKGNP. The tract at residues 857-1051 is shikimate kinase; that stretch reads PKSIFIIGMR…KKKPQSSFVS (195 aa). 864 to 871 contacts ATP; sequence GMRGAGKS. The interval 1052–1265 is 3-dehydroquinase; the sequence is LTVPNVSKAL…AAPGQLSAAE (214 aa). Residue His-1168 is the Proton acceptor; for 3-dehydroquinate dehydratase activity of the active site. Lys-1196 functions as the Schiff-base intermediate with substrate; for 3-dehydroquinate dehydratase activity in the catalytic mechanism. A shikimate dehydrogenase region spans residues 1278–1563; sequence PRSFYLFGKP…TDAQAAVMGN (286 aa).

This sequence in the N-terminal section; belongs to the sugar phosphate cyclases superfamily. Dehydroquinate synthase family. The protein in the 2nd section; belongs to the EPSP synthase family. In the 3rd section; belongs to the shikimate kinase family. It in the 4th section; belongs to the type-I 3-dehydroquinase family. This sequence in the C-terminal section; belongs to the shikimate dehydrogenase family. As to quaternary structure, homodimer. It depends on Zn(2+) as a cofactor.

The protein resides in the cytoplasm. The catalysed reaction is 7-phospho-2-dehydro-3-deoxy-D-arabino-heptonate = 3-dehydroquinate + phosphate. It catalyses the reaction 3-dehydroquinate = 3-dehydroshikimate + H2O. It carries out the reaction shikimate + NADP(+) = 3-dehydroshikimate + NADPH + H(+). The enzyme catalyses shikimate + ATP = 3-phosphoshikimate + ADP + H(+). The catalysed reaction is 3-phosphoshikimate + phosphoenolpyruvate = 5-O-(1-carboxyvinyl)-3-phosphoshikimate + phosphate. Its pathway is metabolic intermediate biosynthesis; chorismate biosynthesis; chorismate from D-erythrose 4-phosphate and phosphoenolpyruvate: step 2/7. It functions in the pathway metabolic intermediate biosynthesis; chorismate biosynthesis; chorismate from D-erythrose 4-phosphate and phosphoenolpyruvate: step 3/7. It participates in metabolic intermediate biosynthesis; chorismate biosynthesis; chorismate from D-erythrose 4-phosphate and phosphoenolpyruvate: step 4/7. The protein operates within metabolic intermediate biosynthesis; chorismate biosynthesis; chorismate from D-erythrose 4-phosphate and phosphoenolpyruvate: step 5/7. Its pathway is metabolic intermediate biosynthesis; chorismate biosynthesis; chorismate from D-erythrose 4-phosphate and phosphoenolpyruvate: step 6/7. Its function is as follows. The AROM polypeptide catalyzes 5 consecutive enzymatic reactions in prechorismate polyaromatic amino acid biosynthesis. The sequence is that of Pentafunctional AROM polypeptide from Sordaria macrospora (strain ATCC MYA-333 / DSM 997 / K(L3346) / K-hell).